Reading from the N-terminus, the 452-residue chain is Probable intron-encoded endonuclease 2 (452 aa).

Transmembrane regions (helical) follow at residues 1-21 (MNIT…NRKN), 22-42 (IILM…LILV), and 57-77 (IYII…LVAF). The tract at residues 1-80 (MNITLILFLI…LAILVAFYRL (80 aa)) is ndh-4L exon 1 encoded. The segment at 81–452 (INSPVKNPRS…SLEGGMNKNI (372 aa)) is ndh-4L intron 1 encoded.

The protein in the N-terminal section; belongs to the complex I subunit 4L family. It in the C-terminal section; belongs to the LAGLIDADG endonuclease family.

The protein localises to the mitochondrion membrane. Mitochondrial DNA endonuclease involved in intron homing. The polypeptide is Probable intron-encoded endonuclease 2 (Neurospora crassa (strain ATCC 24698 / 74-OR23-1A / CBS 708.71 / DSM 1257 / FGSC 987)).